The sequence spans 441 residues: Transcriptional regulatory protein ZraR (441 aa).

One can recognise a Response regulatory domain in the interval 7–121; it reads DILVVDDDVS…RLQETLEKAL (115 aa). Residue D56 is modified to 4-aspartylphosphate. The Sigma-54 factor interaction domain maps to 141-370; that stretch reads MIGSSPAMQH…LENAIERAVV (230 aa). ATP-binding residues include G172, T173, R329, and R359. Residues 421-440 constitute a DNA-binding region (H-T-H motif); the sequence is KTEAARQLGITRKTLLAKLS.

Post-translationally, phosphorylated by ZraS.

Its subcellular location is the cytoplasm. With respect to regulation, activity of the ZraS/ZraR two-component system is repressed by the zinc-bound form of ZraP, which probably interacts with the periplasmic region of ZraS. Its function is as follows. Part of the Zra signaling pathway, an envelope stress response (ESR) system composed of the periplasmic accessory protein ZraP, the histidine kinase ZraS and the transcriptional regulator ZraR. The ZraPSR system contributes to antibiotic resistance and is important for membrane integrity in the presence of membrane-targeting biocides. ZraR is a member of the two-component regulatory system ZraS/ZraR. When activated by ZraS, acts in conjunction with sigma-54 to regulate the expression of zraP in the presence of high Zn(2+) or Pb(2+) concentrations. Also positively autoregulates the expression of the zraSR operon. The sequence is that of Transcriptional regulatory protein ZraR (zraR) from Salmonella typhi.